The following is a 496-amino-acid chain: Protein disulfide-isomerase (496 aa).

The signal sequence occupies residues 1–18; that stretch reads MKFLICALFLAASYVAAS. Thioredoxin domains lie at 19-134 and 349-474; these read AEAE…KKTG and GKLK…ANGE. Residues Cys-56, Cys-59, Cys-397, and Cys-400 each act as nucleophile in the active site. 2 cysteine pairs are disulfide-bonded: Cys-56-Cys-59 and Cys-397-Cys-400. A disordered region spans residues 473-496; sequence GEVADSEPVEETEEEEEAPKKDEL. The segment covering 476–489 has biased composition (acidic residues); the sequence is ADSEPVEETEEEEE. The Prevents secretion from ER motif lies at 493 to 496; sequence KDEL.

It belongs to the protein disulfide isomerase family. Homodimer. Expressed in all head and body tissues.

The protein localises to the endoplasmic reticulum lumen. The catalysed reaction is Catalyzes the rearrangement of -S-S- bonds in proteins.. In terms of biological role, participates in the folding of proteins containing disulfide bonds. The sequence is that of Protein disulfide-isomerase (Pdi) from Drosophila melanogaster (Fruit fly).